Here is a 90-residue protein sequence, read N- to C-terminus: Probable Fe(2+)-trafficking protein (90 aa).

The protein belongs to the Fe(2+)-trafficking protein family.

Functionally, could be a mediator in iron transactions between iron acquisition and iron-requiring processes, such as synthesis and/or repair of Fe-S clusters in biosynthetic enzymes. This is Probable Fe(2+)-trafficking protein from Laribacter hongkongensis (strain HLHK9).